The primary structure comprises 115 residues: Large ribosomal subunit protein bL20 (115 aa).

The protein belongs to the bacterial ribosomal protein bL20 family.

Binds directly to 23S ribosomal RNA and is necessary for the in vitro assembly process of the 50S ribosomal subunit. It is not involved in the protein synthesizing functions of that subunit. This Synechococcus sp. (strain WH7803) protein is Large ribosomal subunit protein bL20.